Here is a 395-residue protein sequence, read N- to C-terminus: Flap endonuclease 1 (395 aa).

The interval 1–104 is N-domain; the sequence is MGIKHLYQVI…GELAKRFMRK (104 aa). Asp34 contacts Mg(2+). Residues Arg47 and Arg70 each contribute to the DNA site. Residues Asp86, Glu158, Glu160, Asp179, and Asp181 each contribute to the Mg(2+) site. The interval 122-253 is I-domain; sequence DVEKFSRRTV…NTALKLIRDH (132 aa). A DNA-binding site is contributed by Glu158. Residues Gly231 and Asp233 each coordinate DNA. Asp233 serves as a coordination point for Mg(2+). The tract at residues 341–349 is interaction with PCNA; it reads QQSRLEGFF. A compositionally biased stretch (basic and acidic residues) spans 357–389; it reads QEKATLKRKHEEKLELQKKKKKEEAKAKKEAKS. The disordered stretch occupies residues 357–395; it reads QEKATLKRKHEEKLELQKKKKKEEAKAKKEAKSKPRGAV.

It belongs to the XPG/RAD2 endonuclease family. FEN1 subfamily. Interacts with PCNA. Three molecules of FEN1 bind to one PCNA trimer with each molecule binding to one PCNA monomer. PCNA stimulates the nuclease activity without altering cleavage specificity. Requires Mg(2+) as cofactor. In terms of processing, phosphorylated. Phosphorylation upon DNA damage induces relocalization to the nuclear plasma.

Its subcellular location is the nucleus. It localises to the nucleolus. The protein localises to the nucleoplasm. The protein resides in the mitochondrion. In terms of biological role, structure-specific nuclease with 5'-flap endonuclease and 5'-3' exonuclease activities involved in DNA replication and repair. During DNA replication, cleaves the 5'-overhanging flap structure that is generated by displacement synthesis when DNA polymerase encounters the 5'-end of a downstream Okazaki fragment. It enters the flap from the 5'-end and then tracks to cleave the flap base, leaving a nick for ligation. Also involved in the long patch base excision repair (LP-BER) pathway, by cleaving within the apurinic/apyrimidinic (AP) site-terminated flap. Acts as a genome stabilization factor that prevents flaps from equilibrating into structures that lead to duplications and deletions. Also possesses 5'-3' exonuclease activity on nicked or gapped double-stranded DNA, and exhibits RNase H activity. Also involved in replication and repair of rDNA and in repairing mitochondrial DNA. This Ajellomyces dermatitidis (strain ER-3 / ATCC MYA-2586) (Blastomyces dermatitidis) protein is Flap endonuclease 1.